Here is a 217-residue protein sequence, read N- to C-terminus: Vesicle transport through interaction with t-SNAREs homolog 1A (217 aa).

Topologically, residues 1–192 (MSSDFEGYEQ…GMLRRIIQNR (192 aa)) are cytoplasmic. Coiled-coil stretches lie at residues 31 to 92 (PDEK…KRSR) and 112 to 178 (ENQR…GKSS). The chain crosses the membrane as a helical; Anchor for type IV membrane protein span at residues 193-213 (ILLVILGIIVVIAILTAIAFF). At 214–217 (VKGH) the chain is on the vesicular side.

This sequence belongs to the VTI1 family. In terms of assembly, interacts with distinct SNARE complexes that contain either STX5 or STX6. Interacts with NAPA and, to a lesser extent, with NAPG. Identified in a complex containing STX6, STX12, VAMP4 and VTI1A. In terms of tissue distribution, widely expressed.

It localises to the golgi apparatus membrane. Functionally, V-SNARE that mediates vesicle transport pathways through interactions with t-SNAREs on the target membrane. These interactions are proposed to mediate aspects of the specificity of vesicle trafficking and to promote fusion of the lipid bilayers. Involved in vesicular transport from the late endosomes to the trans-Golgi network. Along with VAMP7, involved in an non-conventional RAB1-dependent traffic route to the cell surface used by KCNIP1 and KCND2. May be concerned with increased secretion of cytokines associated with cellular senescence. This chain is Vesicle transport through interaction with t-SNAREs homolog 1A (Vti1a), found in Mus musculus (Mouse).